A 353-amino-acid chain; its full sequence is Protein XRP2 (353 aa).

The interval Met1–Lys37 is disordered. Gly2 carries N-myristoyl glycine lipidation. Cys3 carries S-palmitoyl cysteine lipidation. Residues Glu25–Lys37 show a composition bias toward basic and acidic residues. Residues Pro27 to Pro182 form the C-CAP/cofactor C-like domain. GTP is bound by residues Gly101–Ser102 and Gln118–Arg121.

The protein belongs to the TBCC family. Post-translationally, myristoylated on Gly-2; which may be required for membrane targeting. Palmitoylated on Cys-3; which may be required for plasma membrane targeting.

Its subcellular location is the cell membrane. In terms of biological role, acts as a GTPase-activating protein (GAP) for tubulin in concert with tubulin-specific chaperone C, but does not enhance tubulin heterodimerization. Acts as a GTPase-activating protein. May act as guanine nucleotide dissociation inhibitor towards ADP-ribosylation factor-like proteins. The protein is Protein XRP2 (rp2) of Xenopus laevis (African clawed frog).